The chain runs to 315 residues: GTP cyclohydrolase MptA 1 (315 aa).

This sequence belongs to the GTP cyclohydrolase IV family. Homodimer. Fe(2+) is required as a cofactor.

The enzyme catalyses GTP + H2O = 7,8-dihydroneopterin 2',3'-cyclic phosphate + formate + diphosphate + H(+). Its pathway is cofactor biosynthesis; 5,6,7,8-tetrahydromethanopterin biosynthesis. In terms of biological role, converts GTP to 7,8-dihydro-D-neopterin 2',3'-cyclic phosphate, the first intermediate in the biosynthesis of coenzyme methanopterin. The chain is GTP cyclohydrolase MptA 1 from Methanocella arvoryzae (strain DSM 22066 / NBRC 105507 / MRE50).